We begin with the raw amino-acid sequence, 126 residues long: Aspartate 1-decarboxylase (126 aa).

Ser25 functions as the Schiff-base intermediate with substrate; via pyruvic acid in the catalytic mechanism. Position 25 is a pyruvic acid (Ser) (Ser25). Thr57 serves as a coordination point for substrate. The active-site Proton donor is the Tyr58. 73–75 is a binding site for substrate; that stretch reads GAA.

Belongs to the PanD family. In terms of assembly, heterooctamer of four alpha and four beta subunits. The cofactor is pyruvate. Is synthesized initially as an inactive proenzyme, which is activated by self-cleavage at a specific serine bond to produce a beta-subunit with a hydroxyl group at its C-terminus and an alpha-subunit with a pyruvoyl group at its N-terminus.

It localises to the cytoplasm. It catalyses the reaction L-aspartate + H(+) = beta-alanine + CO2. Its pathway is cofactor biosynthesis; (R)-pantothenate biosynthesis; beta-alanine from L-aspartate: step 1/1. Its function is as follows. Catalyzes the pyruvoyl-dependent decarboxylation of aspartate to produce beta-alanine. The chain is Aspartate 1-decarboxylase from Serratia proteamaculans (strain 568).